A 628-amino-acid polypeptide reads, in one-letter code: Monoterpene synthase like 2, chloroplastic (628 aa).

The Mg(2+) site is built by Asp-379, Asp-383, and Asp-531. A DDXXD motif motif is present at residues 379–383 (DDIYD).

It belongs to the terpene synthase family. Tpsd subfamily. Mg(2+) is required as a cofactor. It depends on Mn(2+) as a cofactor.

It is found in the plastid. Its subcellular location is the chloroplast. The protein operates within terpene metabolism; oleoresin biosynthesis. It functions in the pathway secondary metabolite biosynthesis; terpenoid biosynthesis. In terms of biological role, monoterpene synthase (TPS) involved in the biosynthesis of monoterpene natural products included in conifer oleoresin secretions and volatile emissions; these compounds contribute to biotic and abiotic stress defense against herbivores and pathogens. The polypeptide is Monoterpene synthase like 2, chloroplastic (Pinus banksiana (Jack pine)).